Consider the following 120-residue polypeptide: UPF0231 protein YacL (120 aa).

It belongs to the UPF0231 family.

The sequence is that of UPF0231 protein YacL from Escherichia coli O139:H28 (strain E24377A / ETEC).